The chain runs to 693 residues: Ion-translocating oxidoreductase complex subunit C (693 aa).

4Fe-4S ferredoxin-type domains follow at residues M368–Y397 and K407–Y436. Positions 377, 380, 383, 387, 416, 419, 422, and 426 each coordinate [4Fe-4S] cluster. Over residues R539–S548 the composition is skewed to basic and acidic residues. Residues R539–P564 form a disordered region.

It belongs to the 4Fe4S bacterial-type ferredoxin family. RnfC subfamily. The complex is composed of six subunits: RnfA, RnfB, RnfC, RnfD, RnfE and RnfG. The cofactor is [4Fe-4S] cluster.

The protein resides in the cell inner membrane. Part of a membrane-bound complex that couples electron transfer with translocation of ions across the membrane. The protein is Ion-translocating oxidoreductase complex subunit C of Pectobacterium atrosepticum (strain SCRI 1043 / ATCC BAA-672) (Erwinia carotovora subsp. atroseptica).